Reading from the N-terminus, the 279-residue chain is Tryptophan 2,3-dioxygenase (279 aa).

Residues 48-52 (FIIQH), Tyr110, and Arg114 each bind substrate. A heme-binding site is contributed by His237. Thr251 is a substrate binding site.

It belongs to the tryptophan 2,3-dioxygenase family. In terms of assembly, homotetramer. Requires heme as cofactor.

It carries out the reaction L-tryptophan + O2 = N-formyl-L-kynurenine. The protein operates within amino-acid degradation; L-tryptophan degradation via kynurenine pathway; L-kynurenine from L-tryptophan: step 1/2. Functionally, heme-dependent dioxygenase that catalyzes the oxidative cleavage of the L-tryptophan (L-Trp) pyrrole ring and converts L-tryptophan to N-formyl-L-kynurenine. Catalyzes the oxidative cleavage of the indole moiety. The protein is Tryptophan 2,3-dioxygenase of Bradyrhizobium sp. (strain BTAi1 / ATCC BAA-1182).